We begin with the raw amino-acid sequence, 327 residues long: Acyl-CoA desaturase (327 aa).

Residues 1–39 (MPDREIKSPIWHPEPGTVEDVFDHTYKEKEGPKPPTVIV) are Cytoplasmic-facing. The chain crosses the membrane as a helical span at residues 40-60 (WRNVILMSLLHLGALYGLFLF). Position 42 (Asn42) interacts with substrate. At 61-64 (PSAR) the chain is on the lumenal side. Residues 65 to 85 (ALTWIWFFGCLLFSALGITAG) form a helical membrane-spanning segment. The Cytoplasmic portion of the chain corresponds to 86–184 (AHRLWSHRSY…DKVVMFQRRF (99 aa)). Residues His87 and His92 each contribute to the Fe cation site. The short motif at 87–92 (HRLWSH) is the Histidine box-1 element. The substrate site is built by Asn115, Arg122, and Asp123. The Fe cation site is built by His124, His127, and His128. The Histidine box-2 motif lies at 124 to 128 (HRVHH). Substrate-binding residues include Arg155 and Lys156. A helical transmembrane segment spans residues 185-204 (YKPSVLLMCFFVPTFVPWYV). Over 205 to 208 (WGES) the chain is Lumenal. The helical transmembrane segment at 209-230 (LWVAYFVPALLRYALVLNATWL) threads the bilayer. Trp229 contacts substrate. Residues 231 to 327 (VNSAAHMWGN…RTGDGSHWSG (97 aa)) lie on the Cytoplasmic side of the membrane. Residues His236, His265, His268, and His269 each contribute to the Fe cation site. A Histidine box-3 motif is present at residues 265-269 (HNYHH).

Belongs to the fatty acid desaturase type 1 family. Fe(2+) serves as cofactor.

The protein resides in the endoplasmic reticulum membrane. It catalyses the reaction octadecanoyl-CoA + 2 Fe(II)-[cytochrome b5] + O2 + 2 H(+) = (9Z)-octadecenoyl-CoA + 2 Fe(III)-[cytochrome b5] + 2 H2O. Stearoyl-CoA desaturase that utilizes O(2) and electrons from reduced cytochrome b5 to introduce the first double bond into saturated fatty acyl-CoA substrates. Has high specificity and catalyzes the insertion of a cis double bond at the delta-9 position into fatty acyl-CoA substrates including palmitoyl-CoA and stearoyl-CoA. Contributes to the biosynthesis of membrane phospholipids, cholesterol esters and triglycerides. This chain is Acyl-CoA desaturase, found in Cyprinus carpio (Common carp).